Reading from the N-terminus, the 179-residue chain is Large ribosomal subunit protein uL5 (179 aa).

The protein belongs to the universal ribosomal protein uL5 family. Part of the 50S ribosomal subunit; part of the 5S rRNA/L5/L18/L25 subcomplex. Contacts the 5S rRNA and the P site tRNA. Forms a bridge to the 30S subunit in the 70S ribosome.

In terms of biological role, this is one of the proteins that bind and probably mediate the attachment of the 5S RNA into the large ribosomal subunit, where it forms part of the central protuberance. In the 70S ribosome it contacts protein S13 of the 30S subunit (bridge B1b), connecting the 2 subunits; this bridge is implicated in subunit movement. Contacts the P site tRNA; the 5S rRNA and some of its associated proteins might help stabilize positioning of ribosome-bound tRNAs. The protein is Large ribosomal subunit protein uL5 of Chromobacterium violaceum (strain ATCC 12472 / DSM 30191 / JCM 1249 / CCUG 213 / NBRC 12614 / NCIMB 9131 / NCTC 9757 / MK).